The following is a 419-amino-acid chain: MLPPFIVAGLFSSYILIMGLMFSQISHVSNSNASVSSAAKSLESLRVKRDLIGLSGKELLKYFKTNLPTISSNSVFANLDHPLGVTKVSQLYDAFHDYLFGEDQRPIVQKLTQDVTIIPNVHSHNDYWRSLPLFEALMYGVTSVEADVWLTENNTSLSVSHDTRHIDPKHKSLDILYTQPLLEMLNHVNGPQNYHHSDVKEIFDEQDNKMHGVFYGDSSRSLQLLIDFKSENNEKTYELLMSKYLKPFIQRNYLTYLDLTTNEIIRGPLTIVLTGNYPIKESILDYESEDATSESNNHELNKGYFRDNKRYVFLDLPLHKQQLLAKLPTSVLSSASLSQLLTKCQSSLMLLKLRGHLSDDELKCIKKYINHAKEYHLATRIWGIPDWPISTRNRLWKQQFYDLNVDYINTDDLKDIANF.

Positions 1–31 (MLPPFIVAGLFSSYILIMGLMFSQISHVSNS) are cleaved as a signal peptide.

Belongs to the AIM6 family.

This chain is Altered inheritance of mitochondria protein 6 (AIM6), found in Kluyveromyces lactis (strain ATCC 8585 / CBS 2359 / DSM 70799 / NBRC 1267 / NRRL Y-1140 / WM37) (Yeast).